A 141-amino-acid chain; its full sequence is MAKKIQGFLKLQIPAGAANPSPPVGPALGQRGVNIMEFCKAFNEKTKDKAGYRIPVVLTIYTDKSFTFELKQPPMTELIKKISGVKKGSDNPLKNKVGKLSKAQIMEIVDMKIKDLNTDDREVAAKIVAGSARSIGIETEL.

The protein belongs to the universal ribosomal protein uL11 family. In terms of assembly, part of the ribosomal stalk of the 50S ribosomal subunit. Interacts with L10 and the large rRNA to form the base of the stalk. L10 forms an elongated spine to which L12 dimers bind in a sequential fashion forming a multimeric L10(L12)X complex. In terms of processing, one or more lysine residues are methylated.

In terms of biological role, forms part of the ribosomal stalk which helps the ribosome interact with GTP-bound translation factors. The chain is Large ribosomal subunit protein uL11 from Aliarcobacter butzleri (strain RM4018) (Arcobacter butzleri).